The chain runs to 419 residues: Hydrolase LUC6 (419 aa).

The active site involves serine 238.

Belongs to the AB hydrolase superfamily. FUS2 hydrolase family.

It functions in the pathway mycotoxin biosynthesis. In terms of biological role, hydrolase; part of the gene cluster that mediates the biosynthesis of the mycotoxin lucilactaene and the lucilactaene-related compound NG-391 that act as cell cycle inhibitors with potent growth inhibitory activity against malarial parasites, moderate growth inhibitory activity against cancer cells, and no activity against bacteria and fungi. Within the pathway, LUC6 may catalyze the 2-pyrrolidone ring formation to form prelucilactaene C from prelucilactaene B, followed by C-15 hydroxylation by the same enzyme to give prelucilactaene D, epoxydation to yield prelucilactaene E, and finally cyclization to yield prelucilactaene F. The pathway begins with the hybrid PKS-NRPS synthetase LUC5 which is responsible for the condensation of one acetyl-coenzyme A (CoA) unit with six malonyl-CoA units and the amide linkage of the arising heptaketide and homoserine, subsequently releasing the first intermediate prelucilactaene B. Both the cytochrome P450 monooxygenase LUC2 and the hydrolase LUC6 function in parallel in modification of prelucilactaene B. LUC6 may catalyze the 2-pyrrolidone ring formation to form prelucilactaene C from prelucilactaene B, followed by C-15 hydroxylation by the same enzyme to give prelucilactaene D, which is then converted to prelucilactaene E by epoxidation, and finally to prelucilactaene F by cyclization. Prelucilactane D, prelucilactaene E, and prelucilactaene F can be converted to dihydrolucilactaene, NG391, and lucilactaene, respectively, via C-20 methyl group hydroxylation by the cytochrome P450 monooxygenase LUC2. However, LUC2, unlike FUS8 in fusarin C biosynthesis, is not enough for the full oxidation of the C-20 methyl group into carboxylic acid, which is a prerequisite for the final methylation step. The aldehyde dehydrogenase LUC3 is involved in the biosynthesis by further oxidation of the C-20 alcoholic analog prelucilactaene G into a carboxylic derivative. This unidentified carboxylic derivative may be converted to demethyllucilactaene. As the last step, the methyltransferase LUC1 methylates the hydroxyl group at C-21 of demethyllucilactaene to generate lucilactaene. This Fusarium sp protein is Hydrolase LUC6.